We begin with the raw amino-acid sequence, 1165 residues long: Protein hsr-9 (1165 aa).

Disordered regions lie at residues 1–26, 70–578, 608–713, and 874–913; these read MASS…PTTT, AEDE…TEME, KYSM…IPLK, and TRAR…EEEE. Low complexity predominate over residues 16–26; the sequence is TVTQTSLPTTT. 3 stretches are compositionally biased toward basic and acidic residues: residues 98-114, 123-140, and 149-162; these read KDAK…KSES, TFEK…KLDI, and DTEK…KVVG. 3 stretches are compositionally biased toward acidic residues: residues 163 to 179, 211 to 230, and 280 to 289; these read DEDE…DEDE, EKEE…EVEV, and GESEANEENQ. The span at 306–317 shows a compositional bias: polar residues; it reads ATVSSTPSSNTP. Positions 397 to 408 are enriched in basic and acidic residues; the sequence is NTEHPTEEETPK. Over residues 415-431 the composition is skewed to low complexity; that stretch reads SAASSSATSSAVPTPRS. The segment covering 446 to 461 has biased composition (basic and acidic residues); that stretch reads LQEKETEDPTKTHDTN. Over residues 533–543 the composition is skewed to acidic residues; it reads DPIEEADETIE. Residues 554-563 show a composition bias toward low complexity; it reads AAKSAPSSSK. 2 stretches are compositionally biased toward basic and acidic residues: residues 662-671 and 694-708; these read KKEEEHHEND and SEAS…KKEP. The 106-residue stretch at 923-1028 folds into the BRCT domain; it reads IGKNIFTGKV…KCVDYTDYVL (106 aa).

As to expression, expressed in germ cells.

Its subcellular location is the nucleus. Functionally, may have a role in DNA double-strand break repair following gamma-irradiation. In Caenorhabditis elegans, this protein is Protein hsr-9.